A 197-amino-acid chain; its full sequence is MQKVVLATGNAGKVRELASLLSDFGLDVVAQTELGVDSAEETGLTFIENAILKARHAAKMTGLPAIADDSGLAVDVLGGAPGIYSARYSGENATDQQNLEKLLHTLRDVPDDKRQARFHCVLVYLRHAEDPTPIVCHGSWPGVITRQAAGNGGFGYDPIFFVPSEGKTAAELTREEKSAISHRGQALKLLLDALRNG.

8–13 (TGNAGK) is a binding site for substrate. Positions 40 and 69 each coordinate Mg(2+). The active-site Proton acceptor is the Asp-69. Substrate is bound by residues Ser-70, 154 to 157 (FGYD), Lys-177, and 182 to 183 (HR).

This sequence belongs to the HAM1 NTPase family. In terms of assembly, homodimer. The cofactor is Mg(2+).

The enzyme catalyses XTP + H2O = XMP + diphosphate + H(+). It carries out the reaction dITP + H2O = dIMP + diphosphate + H(+). The catalysed reaction is ITP + H2O = IMP + diphosphate + H(+). In terms of biological role, pyrophosphatase that catalyzes the hydrolysis of nucleoside triphosphates to their monophosphate derivatives, with a high preference for the non-canonical purine nucleotides XTP (xanthosine triphosphate), dITP (deoxyinosine triphosphate) and ITP. Seems to function as a house-cleaning enzyme that removes non-canonical purine nucleotides from the nucleotide pool, thus preventing their incorporation into DNA/RNA and avoiding chromosomal lesions. This is dITP/XTP pyrophosphatase (rdgB) from Salmonella paratyphi A (strain ATCC 9150 / SARB42).